The sequence spans 101 residues: Phosphoribosyl-ATP pyrophosphatase (101 aa).

It belongs to the PRA-PH family.

Its subcellular location is the cytoplasm. It catalyses the reaction 1-(5-phospho-beta-D-ribosyl)-ATP + H2O = 1-(5-phospho-beta-D-ribosyl)-5'-AMP + diphosphate + H(+). It functions in the pathway amino-acid biosynthesis; L-histidine biosynthesis; L-histidine from 5-phospho-alpha-D-ribose 1-diphosphate: step 2/9. The sequence is that of Phosphoribosyl-ATP pyrophosphatase from Natronomonas pharaonis (strain ATCC 35678 / DSM 2160 / CIP 103997 / JCM 8858 / NBRC 14720 / NCIMB 2260 / Gabara) (Halobacterium pharaonis).